A 785-amino-acid polypeptide reads, in one-letter code: Endonuclease MutS2 (785 aa).

335-342 (GPNTGGKT) is a binding site for ATP. The 76-residue stretch at 710–785 (LDLRGERYED…GNGVTIVEFK (76 aa)) folds into the Smr domain.

This sequence belongs to the DNA mismatch repair MutS family. MutS2 subfamily. As to quaternary structure, homodimer. Binds to stalled ribosomes, contacting rRNA.

Its function is as follows. Endonuclease that is involved in the suppression of homologous recombination and thus may have a key role in the control of bacterial genetic diversity. In terms of biological role, acts as a ribosome collision sensor, splitting the ribosome into its 2 subunits. Detects stalled/collided 70S ribosomes which it binds and splits by an ATP-hydrolysis driven conformational change. Acts upstream of the ribosome quality control system (RQC), a ribosome-associated complex that mediates the extraction of incompletely synthesized nascent chains from stalled ribosomes and their subsequent degradation. Probably generates substrates for RQC. In Listeria innocua serovar 6a (strain ATCC BAA-680 / CLIP 11262), this protein is Endonuclease MutS2.